Consider the following 379-residue polypeptide: Lipoyl synthase, mitochondrial (379 aa).

Cys-94, Cys-99, Cys-105, Cys-126, Cys-130, Cys-133, and Ser-342 together coordinate [4Fe-4S] cluster. Residues 109 to 331 (GEDNGAATAT…EKEAMSMGFL (223 aa)) enclose the Radical SAM core domain.

It belongs to the radical SAM superfamily. Lipoyl synthase family. It depends on [4Fe-4S] cluster as a cofactor.

Its subcellular location is the mitochondrion. It carries out the reaction [[Fe-S] cluster scaffold protein carrying a second [4Fe-4S](2+) cluster] + N(6)-octanoyl-L-lysyl-[protein] + 2 oxidized [2Fe-2S]-[ferredoxin] + 2 S-adenosyl-L-methionine + 4 H(+) = [[Fe-S] cluster scaffold protein] + N(6)-[(R)-dihydrolipoyl]-L-lysyl-[protein] + 4 Fe(3+) + 2 hydrogen sulfide + 2 5'-deoxyadenosine + 2 L-methionine + 2 reduced [2Fe-2S]-[ferredoxin]. It functions in the pathway protein modification; protein lipoylation via endogenous pathway; protein N(6)-(lipoyl)lysine from octanoyl-[acyl-carrier-protein]: step 2/2. Its function is as follows. Catalyzes the radical-mediated insertion of two sulfur atoms into the C-6 and C-8 positions of the octanoyl moiety bound to the lipoyl domains of lipoate-dependent enzymes, thereby converting the octanoylated domains into lipoylated derivatives. The protein is Lipoyl synthase, mitochondrial of Leishmania braziliensis.